The primary structure comprises 146 residues: Flagellar assembly factor FliW (146 aa).

This sequence belongs to the FliW family. In terms of assembly, interacts with translational regulator CsrA and flagellin(s).

The protein resides in the cytoplasm. Its function is as follows. Acts as an anti-CsrA protein, binds CsrA and prevents it from repressing translation of its target genes, one of which is flagellin. Binds to flagellin and participates in the assembly of the flagellum. This Azoarcus sp. (strain BH72) protein is Flagellar assembly factor FliW.